Here is a 98-residue protein sequence, read N- to C-terminus: Keratin, high sulfur matrix protein, IIIB4 (98 aa).

Ala-1 is subject to N-acetylalanine.

This sequence belongs to the KRTAP type 3 family. As to quaternary structure, interacts with wool keratins. Wool.

Functionally, in the wool cortex, wool keratin intermediate filaments are embedded in an interfilamentous matrix, consisting of hair keratin-associated proteins (KRTAP), which are essential for the formation of a rigid and resistant wool shaft through their extensive disulfide bond cross-linking with abundant cysteine residues of wool keratins. The matrix proteins include the high-sulfur and high-glycine-tyrosine keratins. This is Keratin, high sulfur matrix protein, IIIB4 from Ovis aries (Sheep).